The primary structure comprises 62 residues: Prokaryotic ubiquitin-like protein Pup 2 (62 aa).

A disordered region spans residues 1–34; that stretch reads MRQEKPKRHGREDDEPPEPAPAGRARDTTVGDDT. Residues 21–56 form an ARC ATPase binding region; sequence PAGRARDTTVGDDTDELLDEIDGVLEENAVEFVRSY. An Isoglutamyl lysine isopeptide (Glu-Lys) (interchain with K-? in acceptor proteins) cross-link involves residue Glu62.

The protein belongs to the prokaryotic ubiquitin-like protein family. As to quaternary structure, strongly interacts with the proteasome-associated ATPase ARC through a hydrophobic interface; the interacting region of Pup lies in its C-terminal half. There is one Pup binding site per ARC hexamer ring.

It functions in the pathway protein degradation; proteasomal Pup-dependent pathway. Functionally, protein modifier that is covalently attached to lysine residues of substrate proteins, thereby targeting them for proteasomal degradation. The tagging system is termed pupylation. The polypeptide is Prokaryotic ubiquitin-like protein Pup 2 (Saccharopolyspora erythraea (strain ATCC 11635 / DSM 40517 / JCM 4748 / NBRC 13426 / NCIMB 8594 / NRRL 2338)).